Reading from the N-terminus, the 385-residue chain is MSWQQRVDDALTARRATDTLRRRYVVSQGAGRWLVANGRQYLNFSSNDYLGLSQHPQIIRAWQQAAIRFGVGSGGSGHISGYSVAHQALEEELAQWLGYPRALLFISGFAANQAVITALMKKNDRIVADRLSHASLLEAANLSPAQLRRFIHNDTQHLSRLLQSPCVGQQLVVTEGVYSMDGDSAPLAEIQHIARRHHAWLLVDDAHGIGVTGDEGRGTCWQRGVKPELLVVTFGKGFGVSGAAVLCSESVADYLLQFARHLVYSTSMPPAQAQALSASLAVIRSDEGRERREKLAALVQRFRAGVNASRFTLLNAHSAIQPLIVGDNSRALRLAEALRQQGCWATAIRPPTVPVGTARLRLTLTQAHEACDIDRLLEVLHGAGE.

Substrate is bound at residue arginine 21. Pyridoxal 5'-phosphate is bound at residue glycine 108–phenylalanine 109. Histidine 133 provides a ligand contact to substrate. Residues serine 179, histidine 207, and threonine 233 each coordinate pyridoxal 5'-phosphate. Residue lysine 236 is modified to N6-(pyridoxal phosphate)lysine. Substrate is bound at residue threonine 352.

This sequence belongs to the class-II pyridoxal-phosphate-dependent aminotransferase family. BioF subfamily. In terms of assembly, homodimer. Pyridoxal 5'-phosphate serves as cofactor.

It catalyses the reaction 6-carboxyhexanoyl-[ACP] + L-alanine + H(+) = (8S)-8-amino-7-oxononanoate + holo-[ACP] + CO2. Its pathway is cofactor biosynthesis; biotin biosynthesis. Its function is as follows. Catalyzes the decarboxylative condensation of pimeloyl-[acyl-carrier protein] and L-alanine to produce 8-amino-7-oxononanoate (AON), [acyl-carrier protein], and carbon dioxide. This chain is 8-amino-7-oxononanoate synthase, found in Salmonella paratyphi A (strain ATCC 9150 / SARB42).